The primary structure comprises 468 residues: Methylenetetrahydrofolate--tRNA-(uracil-5-)-methyltransferase TrmFO (468 aa).

13-18 is a binding site for FAD; it reads GGGLAG.

It belongs to the MnmG family. TrmFO subfamily. Requires FAD as cofactor.

The protein localises to the cytoplasm. The catalysed reaction is uridine(54) in tRNA + (6R)-5,10-methylene-5,6,7,8-tetrahydrofolate + NADH + H(+) = 5-methyluridine(54) in tRNA + (6S)-5,6,7,8-tetrahydrofolate + NAD(+). It catalyses the reaction uridine(54) in tRNA + (6R)-5,10-methylene-5,6,7,8-tetrahydrofolate + NADPH + H(+) = 5-methyluridine(54) in tRNA + (6S)-5,6,7,8-tetrahydrofolate + NADP(+). Catalyzes the folate-dependent formation of 5-methyl-uridine at position 54 (M-5-U54) in all tRNAs. The protein is Methylenetetrahydrofolate--tRNA-(uracil-5-)-methyltransferase TrmFO of Bartonella henselae (strain ATCC 49882 / DSM 28221 / CCUG 30454 / Houston 1) (Rochalimaea henselae).